Reading from the N-terminus, the 213-residue chain is Pyridoxine/pyridoxamine 5'-phosphate oxidase (213 aa).

Residues 8 to 11 (RREY) and K67 each bind substrate. Residues 62 to 67 (RIVLLK), 77 to 78 (FT), R83, K84, and Q106 each bind FMN. Y124, R128, and S132 together coordinate substrate. FMN is bound by residues 141-142 (QS) and W186. Residue 192 to 194 (RLH) participates in substrate binding. R196 contacts FMN.

The protein belongs to the pyridoxamine 5'-phosphate oxidase family. In terms of assembly, homodimer. FMN serves as cofactor.

The enzyme catalyses pyridoxamine 5'-phosphate + O2 + H2O = pyridoxal 5'-phosphate + H2O2 + NH4(+). It carries out the reaction pyridoxine 5'-phosphate + O2 = pyridoxal 5'-phosphate + H2O2. The protein operates within cofactor metabolism; pyridoxal 5'-phosphate salvage; pyridoxal 5'-phosphate from pyridoxamine 5'-phosphate: step 1/1. It participates in cofactor metabolism; pyridoxal 5'-phosphate salvage; pyridoxal 5'-phosphate from pyridoxine 5'-phosphate: step 1/1. In terms of biological role, catalyzes the oxidation of either pyridoxine 5'-phosphate (PNP) or pyridoxamine 5'-phosphate (PMP) into pyridoxal 5'-phosphate (PLP). The sequence is that of Pyridoxine/pyridoxamine 5'-phosphate oxidase from Shewanella woodyi (strain ATCC 51908 / MS32).